Here is a 396-residue protein sequence, read N- to C-terminus: NADH-quinone oxidoreductase subunit D 1 (396 aa).

This sequence belongs to the complex I 49 kDa subunit family. As to quaternary structure, NDH-1 is composed of 14 different subunits. Subunits NuoB, C, D, E, F, and G constitute the peripheral sector of the complex.

It is found in the cell inner membrane. The enzyme catalyses a quinone + NADH + 5 H(+)(in) = a quinol + NAD(+) + 4 H(+)(out). NDH-1 shuttles electrons from NADH, via FMN and iron-sulfur (Fe-S) centers, to quinones in the respiratory chain. The immediate electron acceptor for the enzyme in this species is believed to be ubiquinone. Couples the redox reaction to proton translocation (for every two electrons transferred, four hydrogen ions are translocated across the cytoplasmic membrane), and thus conserves the redox energy in a proton gradient. This chain is NADH-quinone oxidoreductase subunit D 1, found in Rhizobium meliloti (strain 1021) (Ensifer meliloti).